Here is a 460-residue protein sequence, read N- to C-terminus: 3-isopropylmalate dehydratase large subunit (460 aa).

Positions 341, 401, and 404 each coordinate [4Fe-4S] cluster.

This sequence belongs to the aconitase/IPM isomerase family. LeuC type 1 subfamily. Heterodimer of LeuC and LeuD. [4Fe-4S] cluster serves as cofactor.

It catalyses the reaction (2R,3S)-3-isopropylmalate = (2S)-2-isopropylmalate. It functions in the pathway amino-acid biosynthesis; L-leucine biosynthesis; L-leucine from 3-methyl-2-oxobutanoate: step 2/4. In terms of biological role, catalyzes the isomerization between 2-isopropylmalate and 3-isopropylmalate, via the formation of 2-isopropylmaleate. This Phocaeicola vulgatus (strain ATCC 8482 / DSM 1447 / JCM 5826 / CCUG 4940 / NBRC 14291 / NCTC 11154) (Bacteroides vulgatus) protein is 3-isopropylmalate dehydratase large subunit.